The primary structure comprises 248 residues: Probable transcriptional regulatory protein Oter_1471 (248 aa).

Belongs to the TACO1 family.

Its subcellular location is the cytoplasm. This is Probable transcriptional regulatory protein Oter_1471 from Opitutus terrae (strain DSM 11246 / JCM 15787 / PB90-1).